A 388-amino-acid chain; its full sequence is Homeobox protein Hox-A13 (388 aa).

The segment at residues 322-381 (GRKKRVPYTKVQLKELEREYATNKFITKDKRRRISATTNLSERQVTIWFQNRRVKEKKVI) is a DNA-binding region (homeobox).

This sequence belongs to the Abd-B homeobox family. In terms of assembly, binds DNA as a homodimer. Interacts with MEIS1, MEIS2 and MEIS3.

The protein localises to the nucleus. In terms of biological role, sequence-specific, AT-rich binding transcription factor which is part of a developmental regulatory system that provides cells with specific positional identities on the anterior-posterior axis. Its function is as follows. Sequence-specific transcription factor which is part of a developmental regulatory system that provides cells with specific positional identities on the anterior-posterior axis. The polypeptide is Homeobox protein Hox-A13 (HOXA13) (Homo sapiens (Human)).